The sequence spans 604 residues: UvrABC system protein C (604 aa).

Residues 15-92 (DLPGCYLMKN…IQKHQPYFNI (78 aa)) form the GIY-YIG domain. Residues 197-232 (ETVKKQLTKRMDQAAADLEFERAAELRDQLNYIEMT) enclose the UVR domain.

It belongs to the UvrC family. Interacts with UvrB in an incision complex.

It is found in the cytoplasm. The UvrABC repair system catalyzes the recognition and processing of DNA lesions. UvrC both incises the 5' and 3' sides of the lesion. The N-terminal half is responsible for the 3' incision and the C-terminal half is responsible for the 5' incision. The polypeptide is UvrABC system protein C (Lactiplantibacillus plantarum (strain ATCC BAA-793 / NCIMB 8826 / WCFS1) (Lactobacillus plantarum)).